A 687-amino-acid chain; its full sequence is MMRAIYLLVVVCWAAAANASSDTVPAEVQTIVKTPGHQYDLYKKMVATISLPANANTEIHKGLNIKRPDNKVTKADIELYYWHKDLKYAVTKFLHLINDDGNKEELTAEEFSNDLQKLAFKVALVECHYQLSPGLRQACYADEILTYGALVLESDDITKFYKHLDNDKDNELKTEEVLKIQHTHKNKDNKIVAEELGAYSGAKKDTVTPEEFEEYVTQESIVDDFRECRSKKATEGTTDYDNVCLTNELVEYVNDDLTEIDISLLYRSVDTNNDNKIIIDELKAFTGITDDVKAKRILELLDMSATTPANAKPVVDYGEWRTYLRSPTVLLQLERDCAMKHNDQLEEINCMYKLLKNLLIDEHDPIWLEAWDLDHVILFEIFDADKDDGKVFKDDLKKIQKNFHFKTEATVTRYMVEADIDKDSFICLEEFDEYMDIPHMVYGTGECILHSRTKPDERGDCFVEETSDVVDNFKFIENAAFDTWFNHYDTNHNNKIEKEADGLLAKFNNDANVLTMFLEETGQGGLTVEPFEFNWYVKQQHLAHAYEDEKIVTALVQKFTAEQITKLHTELIKYINDEMTERDIEDLFDELDHNDDHELTQQDFPDCWNDVKDLLTHIDALIPEGDEDTTVNYLEFWAWINHPNPKKPQELIKKTFETDCTTKHATQKEEVACYVKTFKTKDKFKTA.

Positions 1–19 are cleaved as a signal peptide; sequence MMRAIYLLVVVCWAAAANA. EF-hand domains are found at residues 152 to 187, 257 to 292, 406 to 441, 476 to 511, and 579 to 614; these read LESD…HKNK, LTEI…TDDV, KTEA…PHMV, IENA…NNDA, and MTER…VKDL. Ca(2+) is bound by residues Asp592, Asn594, Asp596, Glu598, and Asp603.

As to expression, expressed in salivary glands where expression is strongest in type III cells in the posterior lobe of the principal glands (at protein level). Not expressed in midgut, Malpighian tubules or epidermis.

It localises to the secreted. Functionally, binds calcium. During feeding of the phloem sap, protein is injected into sieve tubes of rice plants. This process may suppress the sieve-element clogging and facilitate continuous ingestion from sieve tubes. The sequence is that of Calcium-binding protein SP84 from Nephotettix cincticeps (Green rice leafhopper).